The primary structure comprises 119 residues: Large ribosomal subunit protein uL18 (119 aa).

The protein belongs to the universal ribosomal protein uL18 family. As to quaternary structure, part of the 50S ribosomal subunit; part of the 5S rRNA/L5/L18/L25 subcomplex. Contacts the 5S and 23S rRNAs.

This is one of the proteins that bind and probably mediate the attachment of the 5S RNA into the large ribosomal subunit, where it forms part of the central protuberance. The protein is Large ribosomal subunit protein uL18 of Paracoccus denitrificans (strain Pd 1222).